Consider the following 455-residue polypeptide: Exodeoxyribonuclease 7 large subunit (455 aa).

It belongs to the XseA family. As to quaternary structure, heterooligomer composed of large and small subunits.

It is found in the cytoplasm. It carries out the reaction Exonucleolytic cleavage in either 5'- to 3'- or 3'- to 5'-direction to yield nucleoside 5'-phosphates.. In terms of biological role, bidirectionally degrades single-stranded DNA into large acid-insoluble oligonucleotides, which are then degraded further into small acid-soluble oligonucleotides. This chain is Exodeoxyribonuclease 7 large subunit, found in Koribacter versatilis (strain Ellin345).